Here is a 516-residue protein sequence, read N- to C-terminus: Alstonine synthase (516 aa).

A helical membrane pass occupies residues 6-26 (NFSLTSPIFLLLSSLFLIILL). Residue C453 coordinates heme.

This sequence belongs to the cytochrome P450 family. It depends on heme as a cofactor. As to expression, highly expressed in stems. Expressed at low levels in roots.

It localises to the endoplasmic reticulum membrane. The catalysed reaction is tetrahydroalstonine + A + reduced [NADPH--hemoprotein reductase] + O2 = alstonine + AH2 + oxidized [NADPH--hemoprotein reductase] + 2 H2O + H(+). It carries out the reaction ajmalicine + A + reduced [NADPH--hemoprotein reductase] + O2 = serpentine + AH2 + oxidized [NADPH--hemoprotein reductase] + 2 H2O + H(+). Its pathway is alkaloid biosynthesis. Involved in monoterpene indole alkaloids (MIAs) biosynthesis. Converts by aromatization the tetrahydro-beta-carboline alkaloids tetrahydroalstonine and ajmalicine to the corresponding beta-carboline alkaloids alstonine and serpentine, respectively. The protein is Alstonine synthase of Catharanthus roseus (Madagascar periwinkle).